The following is a 553-amino-acid chain: MAFQDQDIFIVFSHASLFLNQNDLLSLSLTSKKMHDMIAIPRLYSNIHITKNPVLRTNKWFLDGGKTYVSGYRSVLKTGDKNDIFLYDRIERLLETSHLKCIKQLTIDEDLFHNREEGLQLLQRLVNEITDLDVIESLDIKDPTLFELCSAKYYRLSSLKKRVVYGETGFDGIKLWQNFKSLKWQLPESLDLQNVIIPEVGVMLMKQLNGGELEIKDEAYSSLRVFEYFDSLNLRFKNLRRLKLNHVHKQGDGSATSMRLSSRAFKDVVNLSNLKALELEFSCEVDDCECDDDFLQDITGNLVSLTSLGFIEKTFTKKGYHYMDEKWDLVVNKFILNLPNVSKDLRLLSIRHDPPLNGKGIDTVDGNLLRRKKLYEKVLPKLTSLETIIAPTVLQSITSYEMYACDLLWNGCKCAFCSKYLPLFDKYIMNHQYFSTPDARYLDIIPIVFAAYTGKSLAKRFDPQKNWDLDLLQYAPEDTTWNFHGFERIHHFASYECYFDESSFEPLATIISHFFYPYMNYLIKILPNLRQTMLSGIYFSVSPELHTYETIYD.

The region spanning 3–49 (FQDQDIFIVFSHASLFLNQNDLLSLSLTSKKMHDMIAIPRLYSNIHI) is the F-box domain.

Interacts with SKP1 and YPT32; SKP1 is required for the interaction with YPT32.

It is found in the cytoplasm. The protein localises to the nucleus. The protein resides in the cytoplasmic vesicle membrane. Its function is as follows. Non-SCF-type F-box protein involved in the endocytic with the vacuolar sorting pathway. Acts as a repressor of YPT52 by inhibiting the formation of active, GTP-bound, YPT52. Involved in the defense mechanism against methylmercury toxicity. This Saccharomyces cerevisiae (strain ATCC 204508 / S288c) (Baker's yeast) protein is Non-SCF-type F-box protein ROY1 (ROY1).